We begin with the raw amino-acid sequence, 232 residues long: Rhamnogalacturonan acetylesterase RhgT (232 aa).

Serine 14 functions as the Nucleophile in the catalytic mechanism. Residues glutamate 191 and histidine 195 contribute to the active site.

It belongs to the 'GDSL' lipolytic enzyme family. Monomer.

Its activity is regulated as follows. Almost completely inhibited by diethylpyrocarbonate at 5 mM and completely inhibited by phenylmethylsulfonyl fluoride (PMSF) at 50 mM. Dimethyl phosphite achieves only a 53% inhibition. Also inhibited by metal ions (magnesium, manganese and calcium) and chelating agent (EDTA) at the same level. In terms of biological role, may play a role in the degradation of type I rhamnogalacturonan derived from plant cell walls. This enzyme has a broad substrate specificity, and shows strong preference for glucose pentaacetate, beta-naphthylacetate, and p-nitrophenyl acetate (pNPA). Also active toward acetylated xylan. This is Rhamnogalacturonan acetylesterase RhgT (rhgT) from Bacillus subtilis (strain 168).